Here is a 430-residue protein sequence, read N- to C-terminus: Enolase (430 aa).

Q163 provides a ligand contact to (2R)-2-phosphoglycerate. E205 serves as the catalytic Proton donor. The Mg(2+) site is built by D242, E288, and D315. 4 residues coordinate (2R)-2-phosphoglycerate: K340, R369, S370, and K391. K340 functions as the Proton acceptor in the catalytic mechanism.

This sequence belongs to the enolase family. Requires Mg(2+) as cofactor.

The protein localises to the cytoplasm. It localises to the secreted. The protein resides in the cell surface. It carries out the reaction (2R)-2-phosphoglycerate = phosphoenolpyruvate + H2O. It participates in carbohydrate degradation; glycolysis; pyruvate from D-glyceraldehyde 3-phosphate: step 4/5. Catalyzes the reversible conversion of 2-phosphoglycerate (2-PG) into phosphoenolpyruvate (PEP). It is essential for the degradation of carbohydrates via glycolysis. The sequence is that of Enolase from Aster yellows witches'-broom phytoplasma (strain AYWB).